A 309-amino-acid polypeptide reads, in one-letter code: Methionyl-tRNA formyltransferase (309 aa).

Residue 112-115 (SLLP) coordinates (6S)-5,6,7,8-tetrahydrofolate.

Belongs to the Fmt family.

It catalyses the reaction L-methionyl-tRNA(fMet) + (6R)-10-formyltetrahydrofolate = N-formyl-L-methionyl-tRNA(fMet) + (6S)-5,6,7,8-tetrahydrofolate + H(+). Attaches a formyl group to the free amino group of methionyl-tRNA(fMet). The formyl group appears to play a dual role in the initiator identity of N-formylmethionyl-tRNA by promoting its recognition by IF2 and preventing the misappropriation of this tRNA by the elongation apparatus. This Bartonella quintana (strain Toulouse) (Rochalimaea quintana) protein is Methionyl-tRNA formyltransferase.